Consider the following 307-residue polypeptide: Acetyl-coenzyme A carboxylase carboxyl transferase subunit beta (307 aa).

The disordered stretch occupies residues 1 to 21 (MAMADQRNDKPGRPAAQRERR). The CoA carboxyltransferase N-terminal domain occupies 43–307 (LWVKCPETGE…MGRERLSPAA (265 aa)).

The protein belongs to the AccD/PCCB family. In terms of assembly, acetyl-CoA carboxylase is a heterohexamer composed of biotin carboxyl carrier protein (AccB), biotin carboxylase (AccC) and two subunits each of ACCase subunit alpha (AccA) and ACCase subunit beta (AccD).

It localises to the cytoplasm. The catalysed reaction is N(6)-carboxybiotinyl-L-lysyl-[protein] + acetyl-CoA = N(6)-biotinyl-L-lysyl-[protein] + malonyl-CoA. The protein operates within lipid metabolism; malonyl-CoA biosynthesis; malonyl-CoA from acetyl-CoA: step 1/1. Component of the acetyl coenzyme A carboxylase (ACC) complex. Biotin carboxylase (BC) catalyzes the carboxylation of biotin on its carrier protein (BCCP) and then the CO(2) group is transferred by the transcarboxylase to acetyl-CoA to form malonyl-CoA. This is Acetyl-coenzyme A carboxylase carboxyl transferase subunit beta from Phenylobacterium zucineum (strain HLK1).